Here is a 179-residue protein sequence, read N- to C-terminus: Large ribosomal subunit protein uL5 (179 aa).

It belongs to the universal ribosomal protein uL5 family. In terms of assembly, part of the 50S ribosomal subunit; part of the 5S rRNA/L5/L18/L25 subcomplex. Contacts the 5S rRNA and the P site tRNA. Forms a bridge to the 30S subunit in the 70S ribosome.

This is one of the proteins that bind and probably mediate the attachment of the 5S RNA into the large ribosomal subunit, where it forms part of the central protuberance. In the 70S ribosome it contacts protein S13 of the 30S subunit (bridge B1b), connecting the 2 subunits; this bridge is implicated in subunit movement. Contacts the P site tRNA; the 5S rRNA and some of its associated proteins might help stabilize positioning of ribosome-bound tRNAs. In Erwinia tasmaniensis (strain DSM 17950 / CFBP 7177 / CIP 109463 / NCPPB 4357 / Et1/99), this protein is Large ribosomal subunit protein uL5.